A 1392-amino-acid chain; its full sequence is Leucine-rich PPR motif-containing protein, mitochondrial (1392 aa).

Residues 1–59 constitute a mitochondrion transit peptide; the sequence is MAALLRPARWLLGAAAAPRLPLSLRLPAGVPGRLSSVVRVAAVGSRPAAGERLSQARLY. PPR repeat units lie at residues 125-159, 160-194, 195-229, 230-264, 265-299, 300-334, 402-436, 437-471, 677-708, 709-745, 746-783, 784-820, 821-856, and 953-987; these read LLRS…GVVY, DVSH…NIQP, NRVT…DLPI, TEAV…GIEP, GPDT…DHYF, MDRD…RRSI, HSSS…GFPI, RPHY…GVDP, VGSA…ESDM, VIGG…SAIL, DTAK…IKDA, TVLS…AKPS, SNIS…VLPR, and RDQM…NIIP. Lys151, Lys186, and Lys225 each carry N6-acetyllysine. At Lys291 the chain carries N6-acetyllysine. N6-acetyllysine is present on Lys462. The residue at position 749 (Lys749) is an N6-acetyllysine. The RNA-binding stretch occupies residues 931-1050; it reads ASNQVEALEK…NCKLKKSKDA (120 aa). A phosphoserine mark is found at Ser1025, Ser1026, and Ser1028. PPR repeat units lie at residues 1030 to 1064, 1065 to 1101, 1102 to 1136, 1137 to 1175, 1176 to 1210, and 1315 to 1349; these read GEDV…NVVF, SSET…GFTL, NDAA…KQVP, SQIA…LSKM, VFIN…QAIE, and NDKV…NLKL. Ser1137 carries the phosphoserine modification.

Component of mRNP complexes associated with HNRPA1. Component of the complex, at least composed of LRPPRC, BECN1 and BCL2; the interactions prevent BECN1 from forming an autophagy-inducing complex with PIK3C3. Interacts with CECR2, HEBP2, MAP1S and UXT. Interacts with PPARGC1A. Interacts with FOXO1. Interacts (via N-terminus) with EIF4E; the interaction promotes association of EIF4E with 4ESE-containing mRNAs. Interacts with exportin XPO1/CRM1; interacts both alone and in complex with EIF4E and 4ESE-containing mRNAs to form an EIF4E-dependent mRNA export complex. Interacts with importin IPO8; the interaction occurs when LRPPRC is in its RNA-free form and returns LRPPRC to the nucleus for further export rounds. Interacts with BECN1. As to expression, strongly expressed in heart, liver and kidney. Weakly expressed in brain, skeletal muscle and testes.

The protein resides in the mitochondrion. It is found in the nucleus. Its subcellular location is the nucleoplasm. The protein localises to the nucleus inner membrane. It localises to the nucleus outer membrane. In terms of biological role, may play a role in RNA metabolism in both nuclei and mitochondria. In the nucleus binds to HNRPA1-associated poly(A) mRNAs and is part of nmRNP complexes at late stages of mRNA maturation which are possibly associated with nuclear mRNA export. Positively modulates nuclear export of mRNAs containing the EIF4E sensitivity element (4ESE) by binding simultaneously to both EIF4E and the 4ESE and acting as a platform for assembly for the RNA export complex. Also binds to exportin XPO1/CRM1 to engage the nuclear pore and traffic the bound mRNAs to the cytoplasm. May bind mature mRNA in the nucleus outer membrane. In mitochondria binds to poly(A) mRNA. Plays a role in translation or stability of mitochondrially encoded cytochrome c oxidase (COX) subunits. May be involved in transcription regulation. Cooperates with PPARGC1A to regulate certain mitochondrially encoded genes and gluconeogenic genes and may regulate docking of PPARGC1A to transcription factors. Seems to be involved in the transcription regulation of the multidrug-related genes MDR1 and MVP. Part of a nuclear factor that binds to the invMED1 element of MDR1 and MVP gene promoters. Binds single-stranded DNA. Required for maintaining mitochondrial potential. Suppresses the initiation of basal levels of autophagy and mitophagy by sustaining BCL2 levels. The sequence is that of Leucine-rich PPR motif-containing protein, mitochondrial (Lrpprc) from Mus musculus (Mouse).